The sequence spans 379 residues: Succinyl-diaminopimelate desuccinylase (379 aa).

His-70 is a binding site for Zn(2+). Asp-72 is a catalytic residue. Asp-103 lines the Zn(2+) pocket. Glu-137 acts as the Proton acceptor in catalysis. The Zn(2+) site is built by Glu-138, Glu-166, and His-352.

The protein belongs to the peptidase M20A family. DapE subfamily. As to quaternary structure, homodimer. Requires Zn(2+) as cofactor. The cofactor is Co(2+).

The enzyme catalyses N-succinyl-(2S,6S)-2,6-diaminopimelate + H2O = (2S,6S)-2,6-diaminopimelate + succinate. It functions in the pathway amino-acid biosynthesis; L-lysine biosynthesis via DAP pathway; LL-2,6-diaminopimelate from (S)-tetrahydrodipicolinate (succinylase route): step 3/3. In terms of biological role, catalyzes the hydrolysis of N-succinyl-L,L-diaminopimelic acid (SDAP), forming succinate and LL-2,6-diaminopimelate (DAP), an intermediate involved in the bacterial biosynthesis of lysine and meso-diaminopimelic acid, an essential component of bacterial cell walls. This is Succinyl-diaminopimelate desuccinylase from Burkholderia pseudomallei (strain 1106a).